The sequence spans 214 residues: GTP-binding nuclear protein GSP1/Ran (214 aa).

The Small GTPase Ran-type domain occupies 4–168; sequence EVAAFKLVLV…LWLARKLAGN (165 aa). Residue 15-22 coordinates GTP; sequence DGGTGKTT. A switch-I region spans residues 34-42; the sequence is NRYNATLGV. GTP is bound by residues G65, 119–122, and 147–149; these read NKVD and SAK. The tract at residues 65–81 is switch-II; the sequence is GQEKFGGLRDGYYINGQ.

Belongs to the small GTPase superfamily. Ran family. Found in a nuclear export complex with RanGTP, exportin and pre-miRNA.

It localises to the nucleus. Functionally, GTP-binding protein involved in nucleocytoplasmic transport. Required for the import of protein into the nucleus and also for RNA export. Involved in chromatin condensation and control of cell cycle. The protein is GTP-binding nuclear protein GSP1/Ran (GSP1) of Yarrowia lipolytica (strain CLIB 122 / E 150) (Yeast).